We begin with the raw amino-acid sequence, 285 residues long: 2-dehydro-3-deoxyphosphooctonate aldolase (285 aa).

This sequence belongs to the KdsA family.

It is found in the cytoplasm. The catalysed reaction is D-arabinose 5-phosphate + phosphoenolpyruvate + H2O = 3-deoxy-alpha-D-manno-2-octulosonate-8-phosphate + phosphate. It functions in the pathway carbohydrate biosynthesis; 3-deoxy-D-manno-octulosonate biosynthesis; 3-deoxy-D-manno-octulosonate from D-ribulose 5-phosphate: step 2/3. The protein operates within bacterial outer membrane biogenesis; lipopolysaccharide biosynthesis. The sequence is that of 2-dehydro-3-deoxyphosphooctonate aldolase from Paracidovorax citrulli (strain AAC00-1) (Acidovorax citrulli).